The following is a 400-amino-acid chain: tRNA(Met) cytidine acetate ligase (400 aa).

ATP contacts are provided by residues 7-20 (IVEY…HLYH), Gly101, Asn159, and Arg184.

The protein belongs to the TmcAL family.

Its subcellular location is the cytoplasm. The catalysed reaction is cytidine(34) in elongator tRNA(Met) + acetate + ATP = N(4)-acetylcytidine(34) in elongator tRNA(Met) + AMP + diphosphate. Functionally, catalyzes the formation of N(4)-acetylcytidine (ac(4)C) at the wobble position of elongator tRNA(Met), using acetate and ATP as substrates. First activates an acetate ion to form acetyladenylate (Ac-AMP) and then transfers the acetyl group to tRNA to form ac(4)C34. The chain is tRNA(Met) cytidine acetate ligase from Caldicellulosiruptor saccharolyticus (strain ATCC 43494 / DSM 8903 / Tp8T 6331).